A 264-amino-acid chain; its full sequence is GTP cyclohydrolase FolE2 (264 aa).

The protein belongs to the GTP cyclohydrolase IV family.

The catalysed reaction is GTP + H2O = 7,8-dihydroneopterin 3'-triphosphate + formate + H(+). It participates in cofactor biosynthesis; 7,8-dihydroneopterin triphosphate biosynthesis; 7,8-dihydroneopterin triphosphate from GTP: step 1/1. Functionally, converts GTP to 7,8-dihydroneopterin triphosphate. This is GTP cyclohydrolase FolE2 from Nitratidesulfovibrio vulgaris (strain ATCC 29579 / DSM 644 / CCUG 34227 / NCIMB 8303 / VKM B-1760 / Hildenborough) (Desulfovibrio vulgaris).